The chain runs to 1502 residues: Leucine-rich repeat-containing protein 9 (1502 aa).

LRR repeat units follow at residues 53-79 (FPNL…HFLK), 97-119 (CADL…LENL), 120-141 (LKLE…LDMM), 142-164 (QNLK…LDPN), 166-188 (QLER…NLAR), 224-247 (LQRL…TVVK), 296-320 (EHEL…KFHE), 699-721 (YSQI…ISRL), 722-744 (NGLR…SYLT), 746-764 (LEYL…GFKG), 765-790 (LGKL…ILRK), 792-814 (AIQL…VLKD), 822-849 (LTHL…RITQ), 894-916 (YTKI…LEKL), 917-938 (VNLR…LEHC), 939-960 (VNLE…LSKL), 961-983 (TKLR…VIES), 985-1009 (SHLH…GYKL), 1011-1030 (ELYL…SLKG), 1031-1053 (LNNL…NYRL), 1100-1123 (FTEL…PADH), 1124-1146 (FRNV…LIFL), 1147-1170 (PNIK…KSQS), 1209-1232 (MQSL…QLGR), 1234-1255 (RNLK…LENL), 1256-1278 (QFLR…SFAK), 1280-1301 (NSLV…LPPL), 1302-1325 (LKLR…KLEV), and 1327-1351 (PALV…LLVV). The disordered stretch occupies residues 317 to 342 (KFHENNCDTEESNSQQSSERRKNNSD). Residues 1479 to 1496 (TQQSGQARSQQKHPFNQE) are compositionally biased toward polar residues. The interval 1479-1502 (TQQSGQARSQQKHPFNQENEGRCV) is disordered.

The sequence is that of Leucine-rich repeat-containing protein 9 (lrrc9) from Xenopus tropicalis (Western clawed frog).